The sequence spans 477 residues: Proline--tRNA ligase (477 aa).

T111, E113, and R142 together coordinate L-proline. ATP is bound by residues R142, T153, Q225, and T228. Residue H230 coordinates L-proline. 2 residues coordinate ATP: S262 and R264. Residues 340–369 (ELKGVPFRVELGPKDLEGGQAVLASRLGGK) form an interaction with tRNA region. C427, C432, C458, and C461 together coordinate Zn(2+).

This sequence belongs to the class-II aminoacyl-tRNA synthetase family. ProS type 3 subfamily. In terms of assembly, homodimer. Only one tRNA molecule binds per dimer.

It localises to the cytoplasm. It carries out the reaction tRNA(Pro) + L-proline + ATP = L-prolyl-tRNA(Pro) + AMP + diphosphate. Functionally, catalyzes the attachment of proline to tRNA(Pro) in a two-step reaction: proline is first activated by ATP to form Pro-AMP and then transferred to the acceptor end of tRNA(Pro). Can inadvertently accommodate and process cysteine. This chain is Proline--tRNA ligase (proS), found in Thermus thermophilus (strain ATCC 27634 / DSM 579 / HB8).